The sequence spans 202 residues: Small ribosomal subunit protein uS4c (202 aa).

The S4 RNA-binding domain maps to 90–153 (MRLDNVIFRL…KSETIISKNI (64 aa)).

The protein belongs to the universal ribosomal protein uS4 family. As to quaternary structure, part of the 30S ribosomal subunit. Contacts protein S5. The interaction surface between S4 and S5 is involved in control of translational fidelity.

Its subcellular location is the plastid. It localises to the chloroplast. One of the primary rRNA binding proteins, it binds directly to 16S rRNA where it nucleates assembly of the body of the 30S subunit. Its function is as follows. With S5 and S12 plays an important role in translational accuracy. This Sphaerocarpos donnelli (Liverwort) protein is Small ribosomal subunit protein uS4c (rps4).